We begin with the raw amino-acid sequence, 412 residues long: Putative odorant receptor 85d (412 aa).

The Cytoplasmic segment spans residues 1–56 (MLTKKDTQSAKEQEKLKAIPLHSFLKYANVFYLSIGMMAYDHKYSQKWKEVLLHWT). A helical membrane pass occupies residues 57–77 (FIAQMVNLNTVLISELIYVFL). The Extracellular portion of the chain corresponds to 78 to 84 (AIGKGSN). The helical transmembrane segment at 85-105 (FLEATMNLSFIGFVIVGDFKI) threads the bilayer. The Cytoplasmic portion of the chain corresponds to 106-152 (WNISRQRKRLTQVVSRLEELHPQGLAQQEPYNIGHHLSGYSRYSKFY). Residues 153-173 (FGMHMVLIWTYNLYWAVYYLV) form a helical membrane-spanning segment. Over 174–219 (CDFWLGMRQFERMLPYYCWVPWDWSTGYSYYFMYISQNIGGQACLS) the chain is Extracellular. The helical transmembrane segment at 220 to 240 (GQLAADMLMCALVTLVVMHFI) threads the bilayer. At 241 to 282 (RLSAHIESHVAGIGSFQHDLEFLQATVAYHQSLIHLCQDINE) the chain is on the cytoplasmic side. Residues 283–303 (IFGVSLLSNFVSSSFIICFVG) form a helical membrane-spanning segment. Residues 304-314 (FQMTIGSKIDN) lie on the Extracellular side of the membrane. A helical membrane pass occupies residues 315–335 (LVMLVLFLFCAMVQVFMIATH). The Cytoplasmic segment spans residues 336–382 (AQRLVDASEQIGQAVYNHDWFRADLRYRKMLILIIKRAQQPSRLKAT). Residues 383–403 (MFLNISLVTVSDLLQLSYKFF) traverse the membrane as a helical segment. Topologically, residues 404–412 (ALLRTMYVN) are extracellular.

This sequence belongs to the insect chemoreceptor superfamily. Heteromeric odorant receptor channel (TC 1.A.69) family. Or49a subfamily. As to quaternary structure, interacts with Orco. Complexes exist early in the endomembrane system in olfactory sensory neurons (OSNs), coupling these complexes to the conserved ciliary trafficking pathway. In terms of tissue distribution, expressed in olfactory sensory neurons in the maxillary palp.

It localises to the cell membrane. In terms of biological role, odorant receptor which mediates acceptance or avoidance behavior, depending on its substrates. The odorant receptor repertoire encodes a large collection of odor stimuli that vary widely in identity, intensity, and duration. May form a complex with Orco to form odorant-sensing units, providing sensitive and prolonged odorant signaling and calcium permeability. The protein is Putative odorant receptor 85d (Or85d) of Drosophila melanogaster (Fruit fly).